A 211-amino-acid polypeptide reads, in one-letter code: Probable transcription repressor protein RGM1 (211 aa).

Residues 6-11 (PKRNKD) carry the Nuclear localization signal motif. 2 consecutive C2H2-type zinc fingers follow at residues 19–44 (YRCV…IRKH) and 50–73 (FQCN…SSVH). The segment at 178-211 (NIVELPPDSSDTPASPSKVQSFDQAKDASPNAKK) is disordered. Residues 183–194 (PPDSSDTPASPS) are compositionally biased toward low complexity.

It localises to the nucleus. In Saccharomyces cerevisiae (strain ATCC 204508 / S288c) (Baker's yeast), this protein is Probable transcription repressor protein RGM1 (RGM1).